The following is a 366-amino-acid chain: Histidinol-phosphate aminotransferase (366 aa).

Lys222 bears the N6-(pyridoxal phosphate)lysine mark.

This sequence belongs to the class-II pyridoxal-phosphate-dependent aminotransferase family. Histidinol-phosphate aminotransferase subfamily. As to quaternary structure, homodimer. Pyridoxal 5'-phosphate serves as cofactor.

It catalyses the reaction L-histidinol phosphate + 2-oxoglutarate = 3-(imidazol-4-yl)-2-oxopropyl phosphate + L-glutamate. It participates in amino-acid biosynthesis; L-histidine biosynthesis; L-histidine from 5-phospho-alpha-D-ribose 1-diphosphate: step 7/9. This is Histidinol-phosphate aminotransferase from Lysinibacillus sphaericus (strain C3-41).